Here is a 665-residue protein sequence, read N- to C-terminus: DNA ligase (665 aa).

NAD(+) is bound by residues 31–35 (DQEFD), 80–81 (SL), and Glu110. Catalysis depends on Lys112, which acts as the N6-AMP-lysine intermediate. Positions 133, 170, 285, and 309 each coordinate NAD(+). Positions 403, 406, 421, and 427 each coordinate Zn(2+). Positions 587–665 (EHTDKLAGKS…SEEEFLQMIE (79 aa)) constitute a BRCT domain.

The protein belongs to the NAD-dependent DNA ligase family. LigA subfamily. It depends on Mg(2+) as a cofactor. The cofactor is Mn(2+).

The catalysed reaction is NAD(+) + (deoxyribonucleotide)n-3'-hydroxyl + 5'-phospho-(deoxyribonucleotide)m = (deoxyribonucleotide)n+m + AMP + beta-nicotinamide D-nucleotide.. DNA ligase that catalyzes the formation of phosphodiester linkages between 5'-phosphoryl and 3'-hydroxyl groups in double-stranded DNA using NAD as a coenzyme and as the energy source for the reaction. It is essential for DNA replication and repair of damaged DNA. In Phocaeicola vulgatus (strain ATCC 8482 / DSM 1447 / JCM 5826 / CCUG 4940 / NBRC 14291 / NCTC 11154) (Bacteroides vulgatus), this protein is DNA ligase.